The primary structure comprises 25 residues: Granule-bound starch synthase 1, chloroplastic/amyloplastic (25 aa).

K16 contributes to the ADP-alpha-D-glucose binding site.

This sequence belongs to the glycosyltransferase 1 family. Bacterial/plant glycogen synthase subfamily. In terms of tissue distribution, expressed in endosperm.

It is found in the plastid. The protein localises to the chloroplast. The protein resides in the amyloplast. The enzyme catalyses an NDP-alpha-D-glucose + [(1-&gt;4)-alpha-D-glucosyl](n) = [(1-&gt;4)-alpha-D-glucosyl](n+1) + a ribonucleoside 5'-diphosphate + H(+). The protein operates within glycan biosynthesis; starch biosynthesis. In terms of biological role, required for the synthesis of amylose in endosperm. This is Granule-bound starch synthase 1, chloroplastic/amyloplastic from Fagopyrum esculentum (Common buckwheat).